The sequence spans 384 residues: Transcription factor iacI (384 aa).

The protein resides in the nucleus. Transcription factor; part of the gene cluster that mediates the biosynthesis of iso-A82775C, a enylepoxycyclohexane and biosynthetic precursor of the chloropestolide anticancer natural products. The sequence is that of Transcription factor iacI from Pestalotiopsis fici (strain W106-1 / CGMCC3.15140).